Here is a 445-residue protein sequence, read N- to C-terminus: MKQRKFFGTDGIRGRVGAGKMTPELALKLGWAAGRVLSRNGTQKVIIGKDTRISGYLFESALEAGLSAAGLNVLLLGPMPTPAVAYLTRTFRAEAGVVISASHNPYYDNGIKFFSTDGSKLDDAIELEIEAELEKPLVCVESHLLGKARRIEDAAGRYIEYCKGNFPADQTLEGLKIVVDCAHGATYHIAPNVFRELGADVIAIGDKPDGLNINDKVGATSMAKICETVLAEKADLGIALDGDGDRIMMVNRHGEVVDGDQILYILAVDAQKRGILKGGVVGTLMSNLGLDLALQALDIPFVRSKVGDRYVMEMLRENEWRIGGENSGHILNLDHGTTGDGIVAGILVLAAMRRQNASLEQLTEPMKMLPQVLVNVRFEGDSNPLDTDAVKSAQADVELQLGARGRVLLRKSGTEPLIRVMVEGDDHPQVLAHANRIADAVKAAC.

Ser-102 acts as the Phosphoserine intermediate in catalysis. Positions 102, 241, 243, and 245 each coordinate Mg(2+). Ser-102 bears the Phosphoserine mark.

Belongs to the phosphohexose mutase family. Requires Mg(2+) as cofactor. Activated by phosphorylation.

The catalysed reaction is alpha-D-glucosamine 1-phosphate = D-glucosamine 6-phosphate. Catalyzes the conversion of glucosamine-6-phosphate to glucosamine-1-phosphate. The sequence is that of Phosphoglucosamine mutase 1 from Shewanella frigidimarina (strain NCIMB 400).